We begin with the raw amino-acid sequence, 269 residues long: NAD kinase (269 aa).

Residue Asp45 is the Proton acceptor of the active site. Residues 45–46 (DG), 121–122 (NE), Arg147, Asp149, 160–165 (TAYNRS), and Ala184 contribute to the NAD(+) site.

The protein belongs to the NAD kinase family. It depends on a divalent metal cation as a cofactor.

Its subcellular location is the cytoplasm. The catalysed reaction is NAD(+) + ATP = ADP + NADP(+) + H(+). Involved in the regulation of the intracellular balance of NAD and NADP, and is a key enzyme in the biosynthesis of NADP. Catalyzes specifically the phosphorylation on 2'-hydroxyl of the adenosine moiety of NAD to yield NADP. The chain is NAD kinase from Pediococcus pentosaceus (strain ATCC 25745 / CCUG 21536 / LMG 10740 / 183-1w).